The chain runs to 377 residues: Flagellin (377 aa).

It belongs to the bacterial flagellin family.

The protein resides in the secreted. Its subcellular location is the bacterial flagellum. Functionally, flagellin is the subunit protein which polymerizes to form the filaments of bacterial flagella. This Clostridium tyrobutyricum protein is Flagellin (fla).